Consider the following 29-residue polypeptide: Cytochrome b6-f complex subunit 8 (29 aa).

Residues 3-23 form a helical membrane-spanning segment; that stretch reads IISLGWSSLLVVFTFSLSLVV.

The protein belongs to the PetN family. In terms of assembly, the 4 large subunits of the cytochrome b6-f complex are cytochrome b6, subunit IV (17 kDa polypeptide, PetD), cytochrome f and the Rieske protein, while the 4 small subunits are PetG, PetL, PetM and PetN. The complex functions as a dimer.

It localises to the plastid. The protein localises to the chloroplast thylakoid membrane. Its function is as follows. Component of the cytochrome b6-f complex, which mediates electron transfer between photosystem II (PSII) and photosystem I (PSI), cyclic electron flow around PSI, and state transitions. This is Cytochrome b6-f complex subunit 8 from Rhodomonas salina (Cryptomonas salina).